Here is an 844-residue protein sequence, read N- to C-terminus: Fe(2+) transport protein A/Fe(2+) transporter FeoB fusion protein (844 aa).

The tract at residues 1–73 (MRLSELHTGD…EDAAKIEVEL (73 aa)) is feoA. The tract at residues 74-844 (ISSNATSSPA…LIYRIGILFF (771 aa)) is feoB. Residues 79-106 (TSSPASNDIGEQSANPDSNESIPTNPTE) are compositionally biased toward polar residues. The disordered stretch occupies residues 79–110 (TSSPASNDIGEQSANPDSNESIPTNPTEDISA). The FeoB-type G domain occupies 126–289 (VIRVALIGNP…FDTLISIHEG (164 aa)). Residues 133–140 (GNPNCGKT), 158–162 (GVTVE), 179–182 (DLPG), 240–243 (NMFD), and 269–271 (VGR) each bind GTP. 8 helical membrane-spanning segments follow: residues 418 to 438 (VLGF…TFVL), 475 to 495 (IGGV…YFFI), 520 to 540 (LHGK…PAIM), 559 to 579 (PLMS…AFFP), 581 to 601 (SAGL…VLLA), 646 to 666 (MGSI…YPRY), 786 to 806 (IIAL…ATVV), and 817 to 837 (WAVF…FLIY).

This sequence in the N-terminal section; belongs to the FeoA family. The protein in the C-terminal section; belongs to the TRAFAC class TrmE-Era-EngA-EngB-Septin-like GTPase superfamily. FeoB GTPase (TC 9.A.8) family.

It is found in the cell inner membrane. In terms of biological role, probable transporter of a GTP-driven Fe(2+) uptake system. The protein is Fe(2+) transport protein A/Fe(2+) transporter FeoB fusion protein of Porphyromonas gingivalis (strain ATCC BAA-308 / W83).